An 88-amino-acid chain; its full sequence is Cell division topological specificity factor (88 aa).

Belongs to the MinE family.

In terms of biological role, prevents the cell division inhibition by proteins MinC and MinD at internal division sites while permitting inhibition at polar sites. This ensures cell division at the proper site by restricting the formation of a division septum at the midpoint of the long axis of the cell. In Carboxydothermus hydrogenoformans (strain ATCC BAA-161 / DSM 6008 / Z-2901), this protein is Cell division topological specificity factor.